The chain runs to 238 residues: D/L-lactic acid transporter (238 aa).

2 helical membrane-spanning segments follow: residues 2-22 (VHQL…GVGV) and 39-59 (IFAI…FGNV). The NPA 1 motif lies at 62 to 64 (NPA). 3 consecutive transmembrane segments (helical) span residues 80–100 (FIPY…IVWI), 135–155 (FFVE…ISEI), and 158–178 (PGIV…GLGG). The NPA 2 signature appears at 185 to 187 (NLA). A helical transmembrane segment spans residues 211-231 (YGIIVPGIAPFVGAAIAAWFM).

Belongs to the MIP/aquaporin (TC 1.A.8) family.

Its subcellular location is the cell membrane. Its function is as follows. Transporter that facilitates the transmembrane diffusion of D/L-lactic acid. Is involved in the cellular racemization of lactate and lactate metabolism. The transported molecule is indeed lactic acid and not the lactate anion, in agreement with the assumption that, with very few exceptions, MIPs (major intrinsic proteins) only facilitate the transport of uncharged solutes. Also facilitates urea and H(2)O(2) diffusion across membranes, but is not permeable to water, glycerol and dihydroxyacetone. The chain is D/L-lactic acid transporter from Lactiplantibacillus plantarum (strain ATCC BAA-793 / NCIMB 8826 / WCFS1) (Lactobacillus plantarum).